A 480-amino-acid polypeptide reads, in one-letter code: CASP8 and FADD-like apoptosis regulator (480 aa).

2 DED domains span residues 1 to 73 (MSAE…RILK) and 92 to 170 (DYRV…KIQK). The segment at 1–195 (MSAEVIHQVE…LQAAIQKSLK (195 aa)) is interaction with CASP8. Residues 1-227 (MSAEVIHQVE…GAQQEPVKKS (227 aa)) form an interaction with FADD region. The tract at residues 1-305 (MSAEVIHQVE…FACMPEHRDY (305 aa)) is interaction with CASP8 propeptide. The segment at 1-435 (MSAEVIHQVE…CLSQKLRQER (435 aa)) is not proteolytically processed and involved in apoptosis inhibition. Positions 192-435 (KSLKDPSNNF…CLSQKLRQER (244 aa)) are interaction with CASP3. Positions 192 to 480 (KSLKDPSNNF…LRKKLILSYT (289 aa)) are interaction with TRAF1 and TRAF2. Residues 217 to 480 (LGAQQEPVKK…LRKKLILSYT (264 aa)) form an interaction with CASP8 subunits p18 and p10 region. Positions 263-358 (ETELLRDTFT…AGKPKMFFIQ (96 aa)) are caspase. The interaction with CASP8 stretch occupies residues 370–480 (SSLLEVDGPA…LRKKLILSYT (111 aa)).

It belongs to the peptidase C14A family. In terms of assembly, TNFRSF6 stimulation triggers recruitment to the death-inducing signaling complex (DISC) formed by TNFRSF6, FADD and CASP8. A proteolytic fragment (p43) stays associated with the DISC. Also interacts with FADD, CASP8, CASP3, TRAF1, TRAF2 and Bcl-X(L) (in vitro). Interacts with RIPK1. (Microbial infection) Interacts with HBV protein X. Post-translationally, proteolytically processed by CASP8 generating subunit p43 and p12. As to expression, widely expressed. Higher expression in skeletal muscle, pancreas, heart, kidney, placenta, and peripheral blood leukocytes. Also detected in diverse cell lines. Isoform 8 is predominantly expressed in testis and skeletal muscle.

Functionally, apoptosis regulator protein which may function as a crucial link between cell survival and cell death pathways in mammalian cells. Acts as an inhibitor of TNFRSF6 mediated apoptosis. A proteolytic fragment (p43) is likely retained in the death-inducing signaling complex (DISC) thereby blocking further recruitment and processing of caspase-8 at the complex. Full length and shorter isoforms have been shown either to induce apoptosis or to reduce TNFRSF-triggered apoptosis. Lacks enzymatic (caspase) activity. The protein is CASP8 and FADD-like apoptosis regulator (CFLAR) of Homo sapiens (Human).